The chain runs to 474 residues: MSRLVVVSNRIAPPDEHAASAGGLAVGILGALKAAGGLWFGWSGETGNEDQPLKKVKKGNITWASFNLSEQDLDEYYNQFSNAVLWPAFHYRLDLVQFQRPAWDGYLRVNALLADKLLPLLQDDDIIWIHDYHLLPFAHELRKRGVNNRIGFFLHIPFPTPEIFNALPTYDTLLEQLCDYDLLGFQTENDRLAFLDCLSNLTRVTTRSAKSHTAWGKAFRTEVYPIGIEPKEIAKQAAGPLPPKLAQLKAELKNVQNIFSVERLDYSKGLPERFLAYEALLEKYPQHHGKIRYTQIAPTSRGDVQAYQDIRHQLENEAGRINGKYGQLGWTPLYYLNQHFDRKLLMKIFRYSDVGLVTPLRDGMNLVAKEYVAAQDPANPGVLVLSQFAGAANELTSALIVNPYDRDEVAAALDRALTMSLAERISRHAEMLDVIVKNDINHWQECFISDLKQIVPRSAESQQRDKVATFPKLA.

D-glucose 6-phosphate is bound at residue arginine 10. 22–23 (GG) is a UDP-alpha-D-glucose binding site. Tyrosine 77 and aspartate 131 together coordinate D-glucose 6-phosphate. Arginine 263 and lysine 268 together coordinate UDP-alpha-D-glucose. Arginine 301 lines the D-glucose 6-phosphate pocket. UDP-alpha-D-glucose is bound by residues phenylalanine 340 and 366–370 (LVAKE).

This sequence belongs to the glycosyltransferase 20 family. Homotetramer.

It catalyses the reaction D-glucose 6-phosphate + UDP-alpha-D-glucose = alpha,alpha-trehalose 6-phosphate + UDP + H(+). It functions in the pathway glycan biosynthesis; trehalose biosynthesis. Its function is as follows. Probably involved in the osmoprotection via the biosynthesis of trehalose. Catalyzes the transfer of glucose from UDP-alpha-D-glucose (UDP-Glc) to D-glucose 6-phosphate (Glc-6-P) to form trehalose-6-phosphate. Acts with retention of the anomeric configuration of the UDP-sugar donor. This Shigella dysenteriae serotype 1 (strain Sd197) protein is Trehalose-6-phosphate synthase.